Here is a 444-residue protein sequence, read N- to C-terminus: 1,4-beta-D-glucan glucohydrolase (444 aa).

The active-site Proton donor is Glu164. Catalysis depends on Glu349, which acts as the Nucleophile.

It belongs to the glycosyl hydrolase 1 family. In terms of assembly, monomer.

The catalysed reaction is Hydrolysis of (1-&gt;4)-linkages in (1-&gt;4)-beta-D-glucans, to remove successive glucose units.. It carries out the reaction Hydrolysis of terminal, non-reducing beta-D-glucosyl residues with release of beta-D-glucose.. The protein operates within glycan metabolism; cellulose degradation. It functions in the pathway glycan metabolism; beta-D-glucan degradation. Its activity is regulated as follows. Activated by glucose up to 200 mM when p-nitrophenyl-beta-glucoside is used as the substrate. This activation by end product concentrations may be due to a transglycosylation activity of the enzyme. Functionally, broad substrate specificity glycosidase. Releases glucose from soluble glucooligomers, with a preference for longer oligomers; acts more readily on cellotetraose than on cellobiose. Displays similar activities towards the disaccharides lactose and cellobiose. Is also able to hydrolyze various aryl-beta-glycosides in vitro. The protein is 1,4-beta-D-glucan glucohydrolase of Thermotoga neapolitana (strain ATCC 49049 / DSM 4359 / NBRC 107923 / NS-E).